The sequence spans 236 residues: Purine nucleoside phosphorylase DeoD-type (236 aa).

Residue His-4 participates in a purine D-ribonucleoside binding. Phosphate contacts are provided by residues Gly-20, Arg-24, Arg-43, and 87 to 90 (RVGS). Residues 179 to 181 (EME) and 203 to 204 (SD) each bind a purine D-ribonucleoside. Asp-204 (proton donor) is an active-site residue.

The protein belongs to the PNP/UDP phosphorylase family. In terms of assembly, homohexamer; trimer of homodimers.

It carries out the reaction a purine D-ribonucleoside + phosphate = a purine nucleobase + alpha-D-ribose 1-phosphate. The catalysed reaction is a purine 2'-deoxy-D-ribonucleoside + phosphate = a purine nucleobase + 2-deoxy-alpha-D-ribose 1-phosphate. Its function is as follows. Catalyzes the reversible phosphorolytic breakdown of the N-glycosidic bond in the beta-(deoxy)ribonucleoside molecules, with the formation of the corresponding free purine bases and pentose-1-phosphate. The chain is Purine nucleoside phosphorylase DeoD-type from Limosilactobacillus reuteri (strain DSM 20016) (Lactobacillus reuteri).